The following is a 182-amino-acid chain: Sec-independent protein translocase protein TatB (182 aa).

The helical transmembrane segment at 1-21 threads the bilayer; it reads MFDIGFSELLLVFVIGLIVLG. Disordered regions lie at residues 87 to 107 and 121 to 182; these read QAAE…ASDE and TQHE…SDKP. Low complexity predominate over residues 168-182; sequence AAPVVESSPSSSDKP.

Belongs to the TatB family. In terms of assembly, the Tat system comprises two distinct complexes: a TatABC complex, containing multiple copies of TatA, TatB and TatC subunits, and a separate TatA complex, containing only TatA subunits. Substrates initially bind to the TatABC complex, which probably triggers association of the separate TatA complex to form the active translocon.

Its subcellular location is the cell inner membrane. Its function is as follows. Part of the twin-arginine translocation (Tat) system that transports large folded proteins containing a characteristic twin-arginine motif in their signal peptide across membranes. Together with TatC, TatB is part of a receptor directly interacting with Tat signal peptides. TatB may form an oligomeric binding site that transiently accommodates folded Tat precursor proteins before their translocation. The polypeptide is Sec-independent protein translocase protein TatB (Salmonella choleraesuis (strain SC-B67)).